We begin with the raw amino-acid sequence, 106 residues long: MAPFIPGELLPEPGEIELNAGRPVTSLHVANSGDRPVQVGSHFHFAEANAALQFDRTAARGQRLDIPAGTAIRFEPGDSRDVNLIPFAGDRRVIGFNGQINGPLDA.

This sequence belongs to the urease beta subunit family. Heterotrimer of UreA (gamma), UreB (beta) and UreC (alpha) subunits. Three heterotrimers associate to form the active enzyme.

Its subcellular location is the cytoplasm. It catalyses the reaction urea + 2 H2O + H(+) = hydrogencarbonate + 2 NH4(+). Its pathway is nitrogen metabolism; urea degradation; CO(2) and NH(3) from urea (urease route): step 1/1. In Synechococcus sp. (strain WH7805), this protein is Urease subunit beta.